A 581-amino-acid polypeptide reads, in one-letter code: Jasmonoyl--L-amino acid synthetase GH3.5 (581 aa).

Ser-92 provides a ligand contact to ATP. Ser-95 contacts jasmonate. Residues Thr-115, Asn-161, and 324-329 contribute to the ATP site; that span reads GASEGW. 159–163 is a binding site for an L-alpha-amino acid; that stretch reads TTNLY. Jasmonate contacts are provided by residues 321-324 and Ser-326; that span reads ADYG. 534 to 538 lines the an L-alpha-amino acid pocket; sequence EILDH. Residue Lys-561 participates in ATP binding.

The protein belongs to the IAA-amido conjugating enzyme family. As to expression, expressed in green shoots, roots and flowers.

The catalysed reaction is a jasmonate + an L-alpha-amino acid + ATP = a jasmonyl-L-amino acid + AMP + diphosphate + H(+). Its function is as follows. Catalyzes the synthesis of jasmonate-amino acid conjugates by adenylation. Catalyzes the conjugation of jasmonate (JA) to Ile when expressed in a heterologous system (E.coli). Catalyzes in vitro the conjugation of jasmonate (JA) to Ile, Phe, Cys, Leu, Met, Ala, Val and Trp. Involved in the production of JA-Ile in response to infection by the rice blast fungus Magnaporthe oryzae. Required for the accumulation of the flavonoid phytoalexin sakuranetin in response to infection by the rice blast fungus. Involved in herbivory-induced JA-Ile accumulation. Involved in the production of JA-Ile in response to wounding. Required for modulation of light and JA signaling in photomorphogenesis. Required for normal seed development. Required for optimal flower opening and closing and anther dehiscence. May catalyze the synthesis of indole-3-acetic acid (IAA)-amino acid conjugates, providing a mechanism for the plant to cope with the presence of excess auxin. This is Jasmonoyl--L-amino acid synthetase GH3.5 from Oryza sativa subsp. japonica (Rice).